The chain runs to 64 residues: Large ribosomal subunit protein eL37 (64 aa).

Residues cysteine 20, cysteine 23, cysteine 35, and cysteine 38 each contribute to the Zn(2+) site. A C4-type zinc finger spans residues 20-38 (CRRCGRRSFHVRKKVCAAC).

Belongs to the eukaryotic ribosomal protein eL37 family. The cofactor is Zn(2+).

Functionally, binds to the 23S rRNA. The sequence is that of Large ribosomal subunit protein eL37 from Methanococcus maripaludis (strain C5 / ATCC BAA-1333).